The chain runs to 187 residues: CRISPR system Cmr subunit Cmr1-2 (187 aa).

This sequence belongs to the CRISPR system Cmr1 family. Part of the type III-B Cmr ribonucleoprotein (RNP) complex. This is an elongated RNP with Cmr2 and Cmr3 as the base, with Cmr4 and Cmr5 forming a helical core along the mature crRNA (39 or 45 nt in length), while the complex is capped by Cmr6 and Cmr1. The 5' end of the crRNA is bound to Cmr2 and Cmr3, while Cmr6 and a Cmr1 subunit (Cmr1-1 or Cmr1-2) cap the 3' end of the crRNA. The target RNA lies antiparallel to the crRNA, with its 5' end near Cmr1 and Cmr6 and its 3' end near Cmr2 and Cmr3; major target cleavage occurs nears the junction of Cmr1/Cmr6 and Cmr4/Cmr, with minor cleavage occurring at 6 nt intervals which coincide with the proposed spacing of Cmr4 subunits.

It is found in the cytoplasm. Its function is as follows. CRISPR (clustered regularly interspaced short palindromic repeat), is an adaptive immune system that provides protection against mobile genetic elements (viruses, transposable elements and conjugative plasmids). CRISPR clusters contain sequences complementary to antecedent mobile elements and target invading nucleic acids. CRISPR clusters are transcribed and processed into CRISPR RNA (crRNA), formerly called psiRNA (prokaryotic silencing) in this organism. Part of the Cmr ribonucleoprotein complex which has divalent cation-dependent endoribonuclease activity specific for ssRNA complementary to the crRNA (target RNA), generating 5' hydroxy- and 3' phosphate or 2'-3' cyclic phosphate termini. Cmr4 is probably the subunit that cleaves target RNA. Cmr complex does not cleave ssDNA complementary to the crRNA. Cleavage of invading RNA is guided by the crRNA; substrate cleavage occurs a fixed distance (14 nt) from the 3' end of the crRNA. In vitro reconstitution shows Cmr1-2 and Cmr5 are not absolutely necessary for target cleavage. The sequence is that of CRISPR system Cmr subunit Cmr1-2 from Pyrococcus furiosus (strain ATCC 43587 / DSM 3638 / JCM 8422 / Vc1).